The chain runs to 145 residues: Lysozyme-like protein 4 (145 aa).

The N-terminal stretch at 1–19 (MQLYLVLLLISYLLTPIGA) is a signal peptide. The C-type lysozyme domain maps to 20–145 (SILGRCTVAK…LDRWLDGCDL (126 aa)). Cystine bridges form between C25–C143, C49–C130, C84–C95, and C91–C109. Residue E54 is part of the active site.

The protein belongs to the glycosyl hydrolase 22 family. In terms of assembly, monomer. As to expression, expressed strongly in testis and in epididymis, and weakly in brain and lung. Detected in sperm (at protein level).

The protein localises to the secreted. It localises to the cytoplasmic vesicle. The protein resides in the secretory vesicle. It is found in the acrosome. Its subcellular location is the cell projection. The protein localises to the cilium. It localises to the flagellum. In terms of biological role, may be involved in fertilization. Has no detectable bacteriolytic in vitro. Has no lysozyme activity in vitro. This Mus musculus (Mouse) protein is Lysozyme-like protein 4 (Lyzl4).